A 1689-amino-acid polypeptide reads, in one-letter code: DNA-directed RNA polymerase I subunit rpa1 (1689 aa).

Zn(2+) contacts are provided by Cys63, Cys66, Cys73, and His76. Phosphoserine is present on residues Ser159 and Ser161. Residues 269 to 280 are compositionally biased toward basic and acidic residues; the sequence is VLRDTSKKHHED. Residues 269–295 are disordered; the sequence is VLRDTSKKHHEDEGYDGDSDSSNESEV. Residues 281 to 295 show a composition bias toward acidic residues; the sequence is EGYDGDSDSSNESEV. The Mg(2+) site is built by Asp643, Asp645, and Asp647. Residues 1005-1017 are bridging helix; the sequence is PQEYYFHCMAGRE. The disordered stretch occupies residues 1346–1440; sequence RKSGGKDDTV…EEDEGFKSDE (95 aa). Phosphoserine is present on residues Ser1438 and Ser1441.

The protein belongs to the RNA polymerase beta' chain family. Component of the RNA polymerase I (Pol I) complex consisting of at least 13 subunits.

It localises to the nucleus. It is found in the nucleolus. It carries out the reaction RNA(n) + a ribonucleoside 5'-triphosphate = RNA(n+1) + diphosphate. Its function is as follows. DNA-dependent RNA polymerase catalyzes the transcription of DNA into RNA using the four ribonucleoside triphosphates as substrates. Largest and catalytic core component of RNA polymerase I which synthesizes ribosomal RNA precursors. Forms the polymerase active center together with the second largest subunit. A single stranded DNA template strand of the promoter is positioned within the central active site cleft of Pol I. A bridging helix emanates from RPA1 and crosses the cleft near the catalytic site and is thought to promote translocation of Pol I by acting as a ratchet that moves the RNA-DNA hybrid through the active site by switching from straight to bent conformations at each step of nucleotide addition. This is DNA-directed RNA polymerase I subunit rpa1 (rpa1) from Schizosaccharomyces pombe (strain 972 / ATCC 24843) (Fission yeast).